We begin with the raw amino-acid sequence, 99 residues long: Probable small ribosomal subunit protein cS23 (99 aa).

Belongs to the chloroplast-specific ribosomal protein cS23 family. Part of the 30S ribosomal subunit.

Probably a ribosomal protein or a ribosome-associated protein. In Synechococcus sp. (strain JA-3-3Ab) (Cyanobacteria bacterium Yellowstone A-Prime), this protein is Probable small ribosomal subunit protein cS23.